We begin with the raw amino-acid sequence, 264 residues long: uncharacterized protein (264 aa).

A divalent metal cation is bound by residues H5, H7, E93, H134, H158, and D208.

Belongs to the metallo-dependent hydrolases superfamily. TatD-type hydrolase family. A divalent metal cation is required as a cofactor.

This is an uncharacterized protein from Mycobacterium tuberculosis (strain ATCC 25618 / H37Rv).